We begin with the raw amino-acid sequence, 442 residues long: Type 3 secretion system ATPase (442 aa).

173–178 (GVGKST) provides a ligand contact to ATP.

It belongs to the ATPase alpha/beta chains family. T3SS ATPase subfamily. As to quaternary structure, the core secretion machinery of the T3SS is composed of approximately 20 different proteins, including cytoplasmic components, a base, an export apparatus and a needle. This subunit is part of the cytosolic complex. Forms homohexamers.

The protein localises to the cytoplasm. The enzyme catalyses ATP + H2O + cellular proteinSide 1 = ADP + phosphate + cellular proteinSide 2.. Functionally, ATPase component of the type III secretion system (T3SS), also called injectisome, which is used to inject bacterial effector proteins into eukaryotic host cells. Acts as a molecular motor to provide the energy that is required for the export of proteins. Required for type III secretion apparatus (T3SA) formation, proper protein secretion, host cell invasion and virulence. May play a critical role in T3SS substrate recognition, disassembly of the effector/chaperone complex and unfolding of the effector in an ATP-dependent manner prior to secretion. The chain is Type 3 secretion system ATPase from Xanthomonas euvesicatoria.